Reading from the N-terminus, the 310-residue chain is Very-long-chain enoyl-CoA reductase (310 aa).

At 1–85 the chain is on the cytoplasmic side; the sequence is MPITIKSRSK…KDLGPQISWR (85 aa). A helical transmembrane segment spans residues 86–106; the sequence is LVFFCEYLGPVLVHSLFYYLS. Topologically, residues 107–141 are lumenal; it reads TIPTVVDRWHSASSDYNPFLNRVAYFLILGHYGKR. A helical transmembrane segment spans residues 142 to 162; it reads LFETLFVHQFSLATMPIFNLF. At 163–165 the chain is on the cytoplasmic side; the sequence is KNC. Residues 166 to 186 traverse the membrane as a helical segment; the sequence is FHYWVLSGLISFGYFGYGFPF. Residues 187 to 201 lie on the Lumenal side of the membrane; it reads GNAKLFKYYSYLKLD. Residues 202–222 form a helical membrane-spanning segment; it reads DLSTLIGLFVLSELWNFYCHI. Residues 223-242 are Cytoplasmic-facing; the sequence is KLRLWGDYQKKHGNAKIRVP. The helical transmembrane segment at 243-265 threads the bilayer; it reads LNQGIFNLFVAPNYTFEVWSWIW. Residues 266 to 268 lie on the Lumenal side of the membrane; that stretch reads FTF. A helical membrane pass occupies residues 269–291; the sequence is VFKFNLFAVLFLTVSTAQMYAWA. At 292–310 the chain is on the cytoplasmic side; it reads QKKNKKYHTRRAFLIPFVF.

The protein belongs to the steroid 5-alpha reductase family. As to quaternary structure, interacts with the fatty acid elongation system components ELO2 and ELO3. Interacts with NVJ1.

The protein localises to the endoplasmic reticulum membrane. It carries out the reaction a very-long-chain 2,3-saturated fatty acyl-CoA + NADP(+) = a very-long-chain (2E)-enoyl-CoA + NADPH + H(+). The catalysed reaction is octadecanoyl-CoA + NADP(+) = (2E)-octadecenoyl-CoA + NADPH + H(+). The enzyme catalyses (2E)-eicosenoyl-CoA + NADPH + H(+) = eicosanoyl-CoA + NADP(+). It catalyses the reaction (2E)-docosenoyl-CoA + NADPH + H(+) = docosanoyl-CoA + NADP(+). It carries out the reaction (2E)-tetracosenoyl-CoA + NADPH + H(+) = tetracosanoyl-CoA + NADP(+). The catalysed reaction is (2E)-hexacosenoyl-CoA + NADPH + H(+) = hexacosanoyl-CoA + NADP(+). It functions in the pathway lipid metabolism; fatty acid biosynthesis. In terms of biological role, catalyzes the last of the four reactions of the long-chain fatty acids elongation cycle. This endoplasmic reticulum-bound enzymatic process, allows the addition of 2 carbons to the chain of long- and very long-chain fatty acids/VLCFAs per cycle. This enzyme reduces the trans-2,3-enoyl-CoA fatty acid intermediate to an acyl-CoA that can be further elongated by entering a new cycle of elongation. Thereby, it participates in the production of VLCFAs of different chain lengths that are involved in multiple biological processes as precursors of membrane lipids and lipid mediators. VLCFAs serve for instance as precursors for ceramide and sphingolipids. Required for normal biogenesis of piecemeal microautophagy of the nucleus (PMN) bleps and vesicles during nutrient stress. The sequence is that of Very-long-chain enoyl-CoA reductase (TSC13) from Saccharomyces cerevisiae (strain ATCC 204508 / S288c) (Baker's yeast).